The following is a 193-amino-acid chain: Peptidyl-tRNA hydrolase (193 aa).

His-17 is a tRNA binding site. The active-site Proton acceptor is His-22. Phe-68, Asn-70, and Asn-116 together coordinate tRNA.

Belongs to the PTH family. As to quaternary structure, monomer.

It is found in the cytoplasm. The enzyme catalyses an N-acyl-L-alpha-aminoacyl-tRNA + H2O = an N-acyl-L-amino acid + a tRNA + H(+). Its function is as follows. Hydrolyzes ribosome-free peptidyl-tRNAs (with 1 or more amino acids incorporated), which drop off the ribosome during protein synthesis, or as a result of ribosome stalling. Functionally, catalyzes the release of premature peptidyl moieties from peptidyl-tRNA molecules trapped in stalled 50S ribosomal subunits, and thus maintains levels of free tRNAs and 50S ribosomes. This chain is Peptidyl-tRNA hydrolase, found in Xanthomonas campestris pv. campestris (strain 8004).